The chain runs to 389 residues: cAMP-dependent protein kinase regulatory subunit (389 aa).

Disordered regions lie at residues 1–57 and 87–110; these read MSEN…KFAG and SVSA…PPYH. Residues 1-128 form a dimerization and phosphorylation region; that stretch reads MSENTFPGRL…RLKKSISGNF (128 aa). Positions 21 to 31 are enriched in polar residues; that stretch reads AANTEKPSTSH. Residues 34–43 are compositionally biased toward basic and acidic residues; the sequence is RVTERDEDKV. At S87 the chain carries Phosphoserine. A compositionally biased stretch (polar residues) spans 87–105; that stretch reads SVSAESLNPNPTASSNESW. 3',5'-cyclic AMP-binding positions include 129-258, E207, R216, 261-377, E327, and R336; these read LFNH…FLEE and LLST…GVEE.

The protein belongs to the cAMP-dependent kinase regulatory chain family. As to quaternary structure, tetramer, composed of 2 regulatory (R) and 2 catalytic (C) subunits. In the presence of cAMP it dissociates into 2 active monomeric C subunits and an R dimer.

This Blumeria graminis (Powdery mildew) protein is cAMP-dependent protein kinase regulatory subunit (pkar).